A 228-amino-acid chain; its full sequence is uncharacterized protein (228 aa).

Disordered stretches follow at residues 1-62 and 160-228; these read MQRP…VGRF and SPRP…LSGV. A compositionally biased stretch (low complexity) spans 13 to 33; the sequence is AASTRAPPRPSAPQQGRRQPS. Over residues 167 to 176 the composition is skewed to polar residues; it reads RGQQVTQDGP.

This is an uncharacterized protein from Homo sapiens (Human).